The primary structure comprises 323 residues: Solute carrier family 35 member B1 (323 aa).

The next 8 helical transmembrane spans lie at 15-35 (LVCFLGVFVCYFYYGILQETI), 51-71 (FALSLVFVQCIVNALFAKLLI), 85-105 (WLYAACSLSYLGAMVSSNSAL), 136-156 (YPLSKYLCVLLIVLGVALFMY), 169-189 (TFGYGELLLLLSLTLDGLTGV), 205-225 (MMLYINLWSSLFLGAGIVFTG), 253-273 (LGQTFIFMTVVYFGPLTCSII), and 286-306 (VILFSNPISSIQWVGTILVFL). The Di-lysine motif signature appears at 319-323 (KKPSH).

This sequence belongs to the nucleotide-sugar transporter family. SLC35B subfamily.

It is found in the endoplasmic reticulum membrane. Its function is as follows. Probable sugar transporter. This Xenopus tropicalis (Western clawed frog) protein is Solute carrier family 35 member B1 (slc35b1).